Reading from the N-terminus, the 297-residue chain is Phosphatidylserine decarboxylase proenzyme (297 aa).

Residues D92, H149, and S254 each act as charge relay system; for autoendoproteolytic cleavage activity in the active site. The active-site Schiff-base intermediate with substrate; via pyruvic acid; for decarboxylase activity is S254. The residue at position 254 (S254) is a Pyruvic acid (Ser); by autocatalysis.

This sequence belongs to the phosphatidylserine decarboxylase family. PSD-B subfamily. Prokaryotic type I sub-subfamily. Heterodimer of a large membrane-associated beta subunit and a small pyruvoyl-containing alpha subunit. Pyruvate serves as cofactor. Post-translationally, is synthesized initially as an inactive proenzyme. Formation of the active enzyme involves a self-maturation process in which the active site pyruvoyl group is generated from an internal serine residue via an autocatalytic post-translational modification. Two non-identical subunits are generated from the proenzyme in this reaction, and the pyruvate is formed at the N-terminus of the alpha chain, which is derived from the carboxyl end of the proenzyme. The autoendoproteolytic cleavage occurs by a canonical serine protease mechanism, in which the side chain hydroxyl group of the serine supplies its oxygen atom to form the C-terminus of the beta chain, while the remainder of the serine residue undergoes an oxidative deamination to produce ammonia and the pyruvoyl prosthetic group on the alpha chain. During this reaction, the Ser that is part of the protease active site of the proenzyme becomes the pyruvoyl prosthetic group, which constitutes an essential element of the active site of the mature decarboxylase.

The protein localises to the cell membrane. It carries out the reaction a 1,2-diacyl-sn-glycero-3-phospho-L-serine + H(+) = a 1,2-diacyl-sn-glycero-3-phosphoethanolamine + CO2. Its pathway is phospholipid metabolism; phosphatidylethanolamine biosynthesis; phosphatidylethanolamine from CDP-diacylglycerol: step 2/2. Functionally, catalyzes the formation of phosphatidylethanolamine (PtdEtn) from phosphatidylserine (PtdSer). The protein is Phosphatidylserine decarboxylase proenzyme of Bordetella bronchiseptica (strain ATCC BAA-588 / NCTC 13252 / RB50) (Alcaligenes bronchisepticus).